Consider the following 457-residue polypeptide: Exodeoxyribonuclease 7 large subunit (457 aa).

This sequence belongs to the XseA family. Heterooligomer composed of large and small subunits.

The protein resides in the cytoplasm. It catalyses the reaction Exonucleolytic cleavage in either 5'- to 3'- or 3'- to 5'-direction to yield nucleoside 5'-phosphates.. In terms of biological role, bidirectionally degrades single-stranded DNA into large acid-insoluble oligonucleotides, which are then degraded further into small acid-soluble oligonucleotides. The sequence is that of Exodeoxyribonuclease 7 large subunit from Enterobacter sp. (strain 638).